Here is a 253-residue protein sequence, read N- to C-terminus: 5'/3'-nucleotidase SurE (253 aa).

Residues Asp-8, Asp-9, Ser-39, and Asn-92 each contribute to the a divalent metal cation site.

The protein belongs to the SurE nucleotidase family. The cofactor is a divalent metal cation.

Its subcellular location is the cytoplasm. It catalyses the reaction a ribonucleoside 5'-phosphate + H2O = a ribonucleoside + phosphate. It carries out the reaction a ribonucleoside 3'-phosphate + H2O = a ribonucleoside + phosphate. The enzyme catalyses [phosphate](n) + H2O = [phosphate](n-1) + phosphate + H(+). Its function is as follows. Nucleotidase with a broad substrate specificity as it can dephosphorylate various ribo- and deoxyribonucleoside 5'-monophosphates and ribonucleoside 3'-monophosphates with highest affinity to 3'-AMP. Also hydrolyzes polyphosphate (exopolyphosphatase activity) with the preference for short-chain-length substrates (P20-25). Might be involved in the regulation of dNTP and NTP pools, and in the turnover of 3'-mononucleotides produced by numerous intracellular RNases (T1, T2, and F) during the degradation of various RNAs. The sequence is that of 5'/3'-nucleotidase SurE from Escherichia coli O127:H6 (strain E2348/69 / EPEC).